Reading from the N-terminus, the 100-residue chain is Protein Tat (100 aa).

Residues methionine 1–asparagine 24 form an interaction with human CREBBP region. Positions methionine 1–glycine 48 are transactivation. Residues cysteine 22, cysteine 25, and cysteine 27 each contribute to the Zn(2+) site. Positions cysteine 22–cysteine 37 are cysteine-rich. Residue lysine 28 is modified to N6-acetyllysine; by host PCAF. 4 residues coordinate Zn(2+): cysteine 30, histidine 33, cysteine 34, and cysteine 37. The core stretch occupies residues phenylalanine 38–glycine 48. Residues glycine 48–threonine 58 are compositionally biased toward basic residues. The interval glycine 48–glutamine 100 is disordered. The Nuclear localization signal, RNA-binding (TAR), and protein transduction motif lies at arginine 49–arginine 57. The interaction with the host capping enzyme RNGTT stretch occupies residues arginine 49–lysine 87. N6-acetyllysine; by host EP300 and GCN5L2 occurs at positions 50 and 51. The residue at position 52 (arginine 52) is an Asymmetric dimethylarginine; by host PRMT6. A compositionally biased stretch (polar residues) spans serine 63 to arginine 79. Lysine 72 participates in a covalent cross-link: Glycyl lysine isopeptide (Lys-Gly) (interchain with G-Cter in ubiquitin). The span at glycine 80–glutamine 100 shows a compositional bias: basic and acidic residues.

The protein belongs to the lentiviruses Tat family. Interacts with host CCNT1. Associates with the P-TEFb complex composed at least of Tat, P-TEFb (CDK9 and CCNT1), TAR RNA, RNA Pol II. Recruits the HATs CREBBP, TAF1/TFIID, EP300, PCAF and GCN5L2. Interacts with host KAT5/Tip60; this interaction targets the latter to degradation. Interacts with the host deacetylase SIRT1. Interacts with host capping enzyme RNGTT; this interaction stimulates RNGTT. Binds to host KDR, and to the host integrins ITGAV/ITGB3 and ITGA5/ITGB1. Interacts with host KPNB1/importin beta-1 without previous binding to KPNA1/importin alpha-1. Interacts with EIF2AK2. Interacts with host nucleosome assembly protein NAP1L1; this interaction may be required for the transport of Tat within the nucleus, since the two proteins interact at the nuclear rim. Interacts with host C1QBP/SF2P32; this interaction involves lysine-acetylated Tat. Interacts with the host chemokine receptors CCR2, CCR3 and CXCR4. Interacts with host DPP4/CD26; this interaction may trigger an anti-proliferative effect. Interacts with host LDLR. Interacts with the host extracellular matrix metalloproteinase MMP1. Interacts with host PRMT6; this interaction mediates Tat's methylation. Interacts with, and is ubiquitinated by MDM2/Hdm2. Interacts with host PSMC3 and HTATIP2. Interacts with STAB1; this interaction may overcome SATB1-mediated repression of IL2 and IL2RA (interleukin) in T cells by binding to the same domain than HDAC1. Interacts (when acetylated) with human CDK13, thereby increasing HIV-1 mRNA splicing and promoting the production of the doubly spliced HIV-1 protein Nef. Interacts with host TBP; this interaction modulates the activity of transcriptional pre-initiation complex. Interacts with host RELA. In terms of processing, asymmetrical arginine methylation by host PRMT6 seems to diminish the transactivation capacity of Tat and affects the interaction with host CCNT1. Acetylation by EP300, CREBBP, GCN5L2/GCN5 and PCAF regulates the transactivation activity of Tat. EP300-mediated acetylation of Lys-50 promotes dissociation of Tat from the TAR RNA through the competitive binding to PCAF's bromodomain. In addition, the non-acetylated Tat's N-terminus can also interact with PCAF. PCAF-mediated acetylation of Lys-28 enhances Tat's binding to CCNT1. Lys-50 is deacetylated by SIRT1. Post-translationally, polyubiquitination by host MDM2 does not target Tat to degradation, but activates its transactivation function and fosters interaction with CCNT1 and TAR RNA. In terms of processing, phosphorylated by EIF2AK2 on serine and threonine residues adjacent to the basic region important for TAR RNA binding and function. Phosphorylation of Tat by EIF2AK2 is dependent on the prior activation of EIF2AK2 by dsRNA.

It is found in the host nucleus. Its subcellular location is the host nucleolus. The protein localises to the host cytoplasm. The protein resides in the secreted. Functionally, transcriptional activator that increases RNA Pol II processivity, thereby increasing the level of full-length viral transcripts. Recognizes a hairpin structure at the 5'-LTR of the nascent viral mRNAs referred to as the transactivation responsive RNA element (TAR) and recruits the cyclin T1-CDK9 complex (P-TEFb complex) that will in turn hyperphosphorylate the RNA polymerase II to allow efficient elongation. The CDK9 component of P-TEFb and other Tat-activated kinases hyperphosphorylate the C-terminus of RNA Pol II that becomes stabilized and much more processive. Other factors such as HTATSF1/Tat-SF1, SUPT5H/SPT5, and HTATIP2 are also important for Tat's function. Besides its effect on RNA Pol II processivity, Tat induces chromatin remodeling of proviral genes by recruiting the histone acetyltransferases (HATs) CREBBP, EP300 and PCAF to the chromatin. This also contributes to the increase in proviral transcription rate, especially when the provirus integrates in transcriptionally silent region of the host genome. To ensure maximal activation of the LTR, Tat mediates nuclear translocation of NF-kappa-B by interacting with host RELA. Through its interaction with host TBP, Tat may also modulate transcription initiation. Tat can reactivate a latently infected cell by penetrating in it and transactivating its LTR promoter. In the cytoplasm, Tat is thought to act as a translational activator of HIV-1 mRNAs. Extracellular circulating Tat can be endocytosed by surrounding uninfected cells via the binding to several surface receptors such as CD26, CXCR4, heparan sulfate proteoglycans (HSPG) or LDLR. Neurons are rarely infected, but they internalize Tat via their LDLR. Through its interaction with nuclear HATs, Tat is potentially able to control the acetylation-dependent cellular gene expression. Modulates the expression of many cellular genes involved in cell survival, proliferation or in coding for cytokines or cytokine receptors. Tat plays a role in T-cell and neurons apoptosis. Tat induced neurotoxicity and apoptosis probably contribute to neuroAIDS. Circulating Tat also acts as a chemokine-like and/or growth factor-like molecule that binds to specific receptors on the surface of the cells, affecting many cellular pathways. In the vascular system, Tat binds to ITGAV/ITGB3 and ITGA5/ITGB1 integrins dimers at the surface of endothelial cells and competes with bFGF for heparin-binding sites, leading to an excess of soluble bFGF. The sequence is that of Protein Tat from Pan (chimpanzees).